A 541-amino-acid chain; its full sequence is Glucose-6-phosphate isomerase (541 aa).

E346 serves as the catalytic Proton donor. Active-site residues include H377 and K506.

It belongs to the GPI family.

It localises to the cytoplasm. The enzyme catalyses alpha-D-glucose 6-phosphate = beta-D-fructose 6-phosphate. Its pathway is carbohydrate biosynthesis; gluconeogenesis. It participates in carbohydrate degradation; glycolysis; D-glyceraldehyde 3-phosphate and glycerone phosphate from D-glucose: step 2/4. Its function is as follows. Catalyzes the reversible isomerization of glucose-6-phosphate to fructose-6-phosphate. The chain is Glucose-6-phosphate isomerase from Agrobacterium fabrum (strain C58 / ATCC 33970) (Agrobacterium tumefaciens (strain C58)).